A 292-amino-acid polypeptide reads, in one-letter code: Probable ABC transporter permease protein YurN (292 aa).

6 helical membrane-spanning segments follow: residues 7–27, 70–90, 106–126, 160–180, 215–235, and 260–280; these read IIPY…YIPI, VLYA…LAAV, VFFL…DFIY, VIFV…IVSI, FVAV…PYIL, and MMGY…ALSL. The region spanning 66 to 282 is the ABC transmembrane type-1 domain; sequence LTNNVLYAVI…IITLALSLMQ (217 aa).

It belongs to the binding-protein-dependent transport system permease family. MalFG subfamily.

The protein localises to the cell membrane. Functionally, probably part of the binding-protein-dependent transport system YurMNO. Probably responsible for the translocation of the substrate across the membrane. This is Probable ABC transporter permease protein YurN (yurN) from Bacillus subtilis (strain 168).